The sequence spans 640 residues: Epithelial sodium channel subunit beta (640 aa).

Over 1-50 the chain is Cytoplasmic; the sequence is MHVKKYLLKGLHRLQKGPGYTYKELLVWYCDNTNTHGPKRIICEGPKKKA. Residues 51-71 form a helical membrane-spanning segment; it reads MWFLLTLLFAALVCWQWGIFI. The Extracellular segment spans residues 72–532; that stretch reads RTYLSWEVSV…GGQFGFWMGG (461 aa). Disulfide bonds link Cys-98/Cys-272, Cys-184/Cys-189, Cys-196/Cys-203, Cys-249/Cys-256, Cys-361/Cys-448, Cys-386/Cys-444, Cys-390/Cys-440, Cys-399/Cys-426, and Cys-401/Cys-415. N-linked (GlcNAc...) asparagine glycosylation occurs at Asn-260. A helical membrane pass occupies residues 533 to 553; sequence SVLCLIEFGEIIIDFVWITII. At 554-640 the chain is on the cytoplasmic side; sequence KLVALAKSLR…IESDSEGDAI (87 aa). The interval 590-640 is disordered; the sequence is FQPDTAPRSPNTGPYPSEQALPIPGTPPPNYDSLRLQPLDVIESDSEGDAI. The short motif at 616-620 is the PY motif; recruits WW domain-containing proteins and is thereby required for ubiquitination and inhibition of the channel by NEDD4 and NEDD4L element; the sequence is PPPNY. A compositionally biased stretch (acidic residues) spans 631-640; sequence IESDSEGDAI. Ser-633 and Ser-635 each carry phosphoserine.

Belongs to the amiloride-sensitive sodium channel (TC 1.A.6) family. SCNN1B subfamily. As to quaternary structure, component of the heterotrimeric epithelial sodium channel (ENaC) composed of an alpha/SCNN1A, a beta/SCNN1B and a gamma/SCNN1G subunit. An additional delta/SCNN1D subunit can replace the alpha/SCNN1A subunit to form an alternative channel with specific properties. Interacts with WWP1 (via WW domains). Interacts with WWP2 (via WW domains); inhibits the channel. Interacts with the full-length immature form of PCSK9 (pro-PCSK9); inhibits ENaC by promoting its proteasomal degradation. Interacts (N-glycosylated) with BPIFA1; the interaction is direct and inhibits the proteolytic processing of SCNN1A and SCNN1G and the activation of ENaC. In terms of processing, ubiquitinated. Can be ubiquitinated at multiple sites and undergo monoubiquitination and polyubiquitination. Ubiquitination by NEDD4 or NEDD4L inhibits the ENaC channel through endocytosis, intracellular retention and degradation of its individual subunits. However, some studies could not confirm the ubiquitination of this subunit of the ENaC. Post-translationally, phosphorylated on serine and threonine residues. Aldosterone and insulin increase the basal level of phosphorylation. N-glycosylated. N-glycosylation is required for interaction with BPIFA1. As to expression, detected in placenta, lung and kidney. Expressed in kidney (at protein level).

The protein resides in the apical cell membrane. It is found in the cytoplasmic vesicle membrane. It carries out the reaction Na(+)(in) = Na(+)(out). Its activity is regulated as follows. Originally identified and characterized by its inhibition by the diuretic drug amiloride. This is one of the three pore-forming subunits of the heterotrimeric epithelial sodium channel (ENaC), a critical regulator of sodium balance and fluid homeostasis. ENaC operates in epithelial tissues, where it mediates the electrodiffusion of sodium ions from extracellular fluid through the apical membrane of cells, with water following osmotically. It plays a key role in maintaining sodium homeostasis through electrogenic sodium reabsorption in the kidneys. Additionally, ENaC is essential for airway surface liquid homeostasis, which is crucial for proper mucus clearance. The polypeptide is Epithelial sodium channel subunit beta (Homo sapiens (Human)).